A 266-amino-acid chain; its full sequence is Tryptophan synthase alpha chain (266 aa).

Catalysis depends on proton acceptor residues E46 and D57.

It belongs to the TrpA family. In terms of assembly, tetramer of two alpha and two beta chains.

The catalysed reaction is (1S,2R)-1-C-(indol-3-yl)glycerol 3-phosphate + L-serine = D-glyceraldehyde 3-phosphate + L-tryptophan + H2O. It participates in amino-acid biosynthesis; L-tryptophan biosynthesis; L-tryptophan from chorismate: step 5/5. Functionally, the alpha subunit is responsible for the aldol cleavage of indoleglycerol phosphate to indole and glyceraldehyde 3-phosphate. This Lacticaseibacillus casei (Lactobacillus casei) protein is Tryptophan synthase alpha chain.